The chain runs to 178 residues: Large ribosomal subunit protein bL25 (178 aa).

This sequence belongs to the bacterial ribosomal protein bL25 family. CTC subfamily. As to quaternary structure, part of the 50S ribosomal subunit; part of the 5S rRNA/L5/L18/L25 subcomplex. Contacts the 5S rRNA. Binds to the 5S rRNA independently of L5 and L18.

Its function is as follows. This is one of the proteins that binds to the 5S RNA in the ribosome where it forms part of the central protuberance. In Helicobacter hepaticus (strain ATCC 51449 / 3B1), this protein is Large ribosomal subunit protein bL25.